Reading from the N-terminus, the 432-residue chain is Ectonucleoside triphosphate diphosphohydrolase 5 (432 aa).

Residues 1–24 (MALYQGAAFFMLVASCVCSTVFHR) form the signal peptide. The Proton acceptor role is filled by Glu175. Asn235 is a glycosylation site (N-linked (GlcNAc...) asparagine). Intrachain disulfides connect Cys275–Cys307 and Cys367–Cys381. An N-linked (GlcNAc...) asparagine glycan is attached at Asn372.

The protein belongs to the GDA1/CD39 NTPase family. In terms of assembly, monomer; active form. Homodimer; disulfide-linked. Homodimers are enzymatically inactive. Ca(2+) serves as cofactor. The cofactor is Mg(2+). Post-translationally, N-glycosylated; high-mannose type.

The protein resides in the endoplasmic reticulum. It localises to the secreted. It catalyses the reaction a ribonucleoside 5'-diphosphate + H2O = a ribonucleoside 5'-phosphate + phosphate + H(+). The enzyme catalyses GDP + H2O = GMP + phosphate + H(+). It carries out the reaction UDP + H2O = UMP + phosphate + H(+). The catalysed reaction is IDP + H2O = IMP + phosphate + H(+). It catalyses the reaction CDP + H2O = CMP + phosphate + H(+). The enzyme catalyses ADP + H2O = AMP + phosphate + H(+). It functions in the pathway protein modification; protein glycosylation. Hydrolyzes nucleoside diphosphates with a preference for GDP, IDP and UDP compared to ADP and CDP. In the lumen of the endoplasmic reticulum, hydrolyzes UDP that acts as an end-product feedback inhibitor of the UDP-Glc:glycoprotein glucosyltransferases. UMP can be transported back by an UDP-sugar antiporter to the cytosol where it is consumed to regenerate UDP-glucose. Therefore, it positively regulates protein reglucosylation by clearing UDP from the ER lumen and by promoting the regeneration of UDP-glucose. Protein reglucosylation is essential to proper glycoprotein folding and quality control in the ER. The protein is Ectonucleoside triphosphate diphosphohydrolase 5 (ENTPD5) of Bos taurus (Bovine).